The following is an 88-amino-acid chain: RNA-binding protein Hfq (88 aa).

The 60-residue stretch at 9–68 (DPYLNVLRKERVPVSIYLVNGIKLQGQVESFDQFVVLLKNTVSQMVYKHAISTVVPSRAV) folds into the Sm domain.

The protein belongs to the Hfq family. As to quaternary structure, homohexamer.

In terms of biological role, RNA chaperone that binds small regulatory RNA (sRNAs) and mRNAs to facilitate mRNA translational regulation in response to envelope stress, environmental stress and changes in metabolite concentrations. Also binds with high specificity to tRNAs. The chain is RNA-binding protein Hfq from Cellvibrio japonicus (strain Ueda107) (Pseudomonas fluorescens subsp. cellulosa).